The chain runs to 153 residues: Putative pre-16S rRNA nuclease (153 aa).

The protein belongs to the YqgF nuclease family.

It localises to the cytoplasm. In terms of biological role, could be a nuclease involved in processing of the 5'-end of pre-16S rRNA. The sequence is that of Putative pre-16S rRNA nuclease from Prochlorococcus marinus (strain AS9601).